Consider the following 101-residue polypeptide: Parathymosin (101 aa).

The segment at 1–101 (MSEKSVEAAA…RQKTENGASA (101 aa)) is disordered. Residue Ser2 is modified to N-acetylserine. Position 2 is a phosphoserine (Ser2). Lys4 is subject to N6-acetyllysine. 2 positions are modified to phosphoserine: Ser5 and Ser13. Positions 13 to 37 (SAKDLKEKKDKVEEKAGRKERKKEV) are enriched in basic and acidic residues. Residue Lys15 is modified to N6-acetyllysine. Positions 38 to 74 (VEEEENGAEEEEEETAEDGEDDDEGDEEDEEEEEEDE) are enriched in acidic residues. Thr52 carries the post-translational modification Phosphothreonine. The residue at position 91 (Lys91) is an N6-acetyllysine.

This sequence belongs to the pro/parathymosin family.

Functionally, parathymosin may mediate immune function by blocking the effect of prothymosin alpha which confers resistance to certain opportunistic infections. This is Parathymosin (Ptms) from Mus musculus (Mouse).